Reading from the N-terminus, the 157-residue chain is Cuticle protein 19 (157 aa).

6 tandem repeats follow at residues 11 to 14 (AAPA), 18 to 21 (AAPA), 24 to 27 (AAPA), 29 to 32 (AAPA), 39 to 42 (AAPA), and 47 to 50 (AAPA). The Chitin-binding type R&amp;R domain maps to 56-127 (YPKYAFEYGV…SGPSAHPAPA (72 aa)). Repeat unit 7 spans residues 141 to 144 (AAPA).

Functionally, component of the cuticle of migratory locust which contains more than 100 different structural proteins. The sequence is that of Cuticle protein 19 from Locusta migratoria (Migratory locust).